The following is a 663-amino-acid chain: Methionine--tRNA ligase (663 aa).

The short motif at 10–20 (AYTNGPLHLGH) is the 'HIGH' region element. Positions 142, 145, 154, and 157 each coordinate Zn(2+). A 'KMSKS' region motif is present at residues 323 to 327 (KMSTS). Residue T326 coordinates ATP. The region spanning 563-663 (YFGNVDLRVG…RDLPVGSKIH (101 aa)) is the tRNA-binding domain.

The protein belongs to the class-I aminoacyl-tRNA synthetase family. MetG type 1 subfamily. Homodimer. The cofactor is Zn(2+).

The protein localises to the cytoplasm. The enzyme catalyses tRNA(Met) + L-methionine + ATP = L-methionyl-tRNA(Met) + AMP + diphosphate. Is required not only for elongation of protein synthesis but also for the initiation of all mRNA translation through initiator tRNA(fMet) aminoacylation. The polypeptide is Methionine--tRNA ligase (Methanococcus maripaludis (strain C7 / ATCC BAA-1331)).